Consider the following 437-residue polypeptide: Adenosylhomocysteinase (437 aa).

Substrate contacts are provided by threonine 58, aspartate 133, and glutamate 158. An NAD(+)-binding site is contributed by 159-161 (TTT). Residues lysine 188 and aspartate 192 each contribute to the substrate site. NAD(+)-binding positions include asparagine 193, 224 to 229 (GDVGKG), glutamate 245, 301 to 303 (VGH), and asparagine 348.

This sequence belongs to the adenosylhomocysteinase family. As to quaternary structure, homotetramer. Requires NAD(+) as cofactor.

The enzyme catalyses S-adenosyl-L-homocysteine + H2O = L-homocysteine + adenosine. Its pathway is amino-acid biosynthesis; L-homocysteine biosynthesis; L-homocysteine from S-adenosyl-L-homocysteine: step 1/1. Functionally, adenosylhomocysteine is a competitive inhibitor of S-adenosyl-L-methionine-dependent methyl transferase reactions; therefore adenosylhomocysteinase may play a key role in the control of methylations via regulation of the intracellular concentration of adenosylhomocysteine. This is Adenosylhomocysteinase (ahcy-1) from Caenorhabditis elegans.